Reading from the N-terminus, the 544-residue chain is Chaperonin GroEL (544 aa).

ATP contacts are provided by residues 30 to 33 (TLGP), lysine 51, 87 to 91 (DGTTT), glycine 415, and aspartate 495.

Belongs to the chaperonin (HSP60) family. In terms of assembly, forms a cylinder of 14 subunits composed of two heptameric rings stacked back-to-back. Interacts with the co-chaperonin GroES.

The protein localises to the cytoplasm. It catalyses the reaction ATP + H2O + a folded polypeptide = ADP + phosphate + an unfolded polypeptide.. Its function is as follows. Together with its co-chaperonin GroES, plays an essential role in assisting protein folding. The GroEL-GroES system forms a nano-cage that allows encapsulation of the non-native substrate proteins and provides a physical environment optimized to promote and accelerate protein folding. This Bartonella bacilliformis (strain ATCC 35685 / KC583 / Herrer 020/F12,63) protein is Chaperonin GroEL.